We begin with the raw amino-acid sequence, 221 residues long: Large ribosomal subunit protein uL3 (221 aa).

The protein belongs to the universal ribosomal protein uL3 family. In terms of assembly, part of the 50S ribosomal subunit. Forms a cluster with proteins L14 and L19.

Functionally, one of the primary rRNA binding proteins, it binds directly near the 3'-end of the 23S rRNA, where it nucleates assembly of the 50S subunit. This chain is Large ribosomal subunit protein uL3, found in Chlamydia muridarum (strain MoPn / Nigg).